Reading from the N-terminus, the 1300-residue chain is MNKIYSLKYSHITGGLIAVSELSGRVSSRATGKKKHKRILALCFLGLLQSSYSFASQMDISNFYIRDYMDFAQNKGIFQAGATNIEIVKKDGSTLKLPEVPFPDFSPVANKGSTTSIGGAYSITATHNTKNHHSVATQNWGNSTYKQTDWNTSHPDFAVSRLDKFVVETRGATEGADISLSKQQALERYGVNYKGEKKLIAFRAGSGVVSVKKNGRITPFNEVSYKPEMLNGSFVHIDDWSGWLILTNNQFDEFNNIASQGDSGSALFVYDNQKKKWVVAGTVWGIYNYANGKNHAAYSKWNQTTIDNLKNKYSYNVDMSGAQVATIENGKLTGTGSDTTDIKNKDLIFTGGGDILLKSSFDNGAGGLVFNDKKTYRVNGDDFTFKGAGVDTRNGSTVEWNIRYDNKDNLHKIGDGTLDVRKTQNTNLKTGEGLVILGAEKTFNNIYITSGDGTVRLNAENALSGGEYNGIFFAKNGGTLDLNGYNQSFNKIAATDSGAVITNTSTKKSILSLNNTADYIYHGNINGNLDVLQHHETKKENRRLILDGGVDTTNDISLRNTQLSMQGHATEHAIYRDGAFSCSLPAPMRFLCGSDYVAGMQNTEADAVKQNGNAYKTNNAVSDLSQPDWETGTFRFGTLHLENSDFSVGRNANVIGDIQASKSNITIGDTTAYIDLHAGKNITGDGFGFRQNIVRGNSQGETLFTGGITAEDSTIVIKDKAKALFSNYVYLLNTKATIENGADVTTQSGMFSTSDISISGNLSMTGNPDKDNKFEPSIYLNDASYLLTDDSARLVAKNKASVVGDIHSTKSASIMFGHDESDLSQLSDRTSKGLALGLLGGFDVSYRGSVNAPSASATMNNTWWQLTGDSALKTLKSTNSMVYFTDSANNKKFHTLTVDELATSNSAYAMRTNLSESDKLEVKKHLSGENNILLVDFLQKPTPEKQLNIELVSAPKDTNENVFKASKQTIGFSDVTPVITTRETDDKITWSLTGYNTVANKEATRNAAALFSVDYKAFLNEVNNLNKRMGDLRDINGEAGAWARIMSGTGSASGGFSDNYTHVQVGVDKKHELDGLDLFTGFTVTHTDSSASADVFSGKTKSVGAGLYASAMFDSGAYIDLIGKYVHHDNEYTATFAGLGTRDYSTHSWYAGAEAGYRYHVTEDAWIEPQAELVYGSVSGKQFAWKDQGMHLSMKDKDYNPLIGRTGVDVGKSFSGKDWKVTARAGLGYQFDLLANGETVLRDASGEKRIKGEKDSRMLMSVGLNAEIRDNVRFGLEFEKSAFGKYNVDNAVNANFRYSF.

Residues 1 to 55 (MNKIYSLKYSHITGGLIAVSELSGRVSSRATGKKKHKRILALCFLGLLQSSYSFA) form the signal peptide. Residues 57–311 (QMDISNFYIR…NQTTIDNLKN (255 aa)) form the Peptidase S6 domain. Residues His-127, Asp-156, and Ser-263 each act as charge relay system in the active site. Positions 1034 to 1300 (DINGEAGAWA…AVNANFRYSF (267 aa)) constitute an Autotransporter domain.

Cleaved to release the mature protein from the outer membrane.

Its subcellular location is the periplasm. It is found in the secreted. The protein localises to the cell surface. It localises to the cell outer membrane. Its activity is regulated as follows. Inhibition of cytotoxic activity by phenylmethylsulfonyl fluoride. In terms of biological role, serine protease capable of cleaving pepsin A and human coagulation factor V, which may contribute to the mucosal hemorrhage observed in hemorrhagic colitis. The chain is Serine protease EspP (espP) from Escherichia coli O157:H7.